The following is a 118-amino-acid chain: MISKPDKNKIRQKRHRRVRGKLSGTADRPRLNVFRSNTGIYAQVIDDVAGVTLASASTLDKEVSKGTKTEQAVVVGKLVAERAVAKGISEVVFDRGGYLYHGRVKALADAARENGLKF.

Residues 1-26 (MISKPDKNKIRQKRHRRVRGKLSGTA) form a disordered region. Basic residues predominate over residues 10–20 (IRQKRHRRVRG).

It belongs to the universal ribosomal protein uL18 family. Part of the 50S ribosomal subunit; part of the 5S rRNA/L5/L18/L25 subcomplex. Contacts the 5S and 23S rRNAs.

Its function is as follows. This is one of the proteins that bind and probably mediate the attachment of the 5S RNA into the large ribosomal subunit, where it forms part of the central protuberance. This chain is Large ribosomal subunit protein uL18, found in Streptococcus equi subsp. zooepidemicus (strain H70).